Here is a 143-residue protein sequence, read N- to C-terminus: Transcriptional regulator MraZ (143 aa).

2 SpoVT-AbrB domains span residues 5-47 (EYQH…PQDE) and 76-119 (ATEC…SKER).

The protein belongs to the MraZ family. Forms oligomers.

It localises to the cytoplasm. The protein resides in the nucleoid. The sequence is that of Transcriptional regulator MraZ from Brevibacillus brevis (strain 47 / JCM 6285 / NBRC 100599).